A 373-amino-acid chain; its full sequence is Queuine tRNA-ribosyltransferase (373 aa).

D89 functions as the Proton acceptor in the catalytic mechanism. Substrate-binding positions include 89 to 93, D143, Q185, and G212; that span reads DSGGF. Residues 243–249 are RNA binding; the sequence is GVGRPED. Catalysis depends on D262, which acts as the Nucleophile. The interval 267–271 is RNA binding; important for wobble base 34 recognition; it reads TRNAR. Residues C300, C302, C305, and H331 each contribute to the Zn(2+) site.

This sequence belongs to the queuine tRNA-ribosyltransferase family. Homodimer. Within each dimer, one monomer is responsible for RNA recognition and catalysis, while the other monomer binds to the replacement base PreQ1. Zn(2+) is required as a cofactor.

It carries out the reaction 7-aminomethyl-7-carbaguanine + guanosine(34) in tRNA = 7-aminomethyl-7-carbaguanosine(34) in tRNA + guanine. The protein operates within tRNA modification; tRNA-queuosine biosynthesis. Catalyzes the base-exchange of a guanine (G) residue with the queuine precursor 7-aminomethyl-7-deazaguanine (PreQ1) at position 34 (anticodon wobble position) in tRNAs with GU(N) anticodons (tRNA-Asp, -Asn, -His and -Tyr). Catalysis occurs through a double-displacement mechanism. The nucleophile active site attacks the C1' of nucleotide 34 to detach the guanine base from the RNA, forming a covalent enzyme-RNA intermediate. The proton acceptor active site deprotonates the incoming PreQ1, allowing a nucleophilic attack on the C1' of the ribose to form the product. After dissociation, two additional enzymatic reactions on the tRNA convert PreQ1 to queuine (Q), resulting in the hypermodified nucleoside queuosine (7-(((4,5-cis-dihydroxy-2-cyclopenten-1-yl)amino)methyl)-7-deazaguanosine). This Marinobacter nauticus (strain ATCC 700491 / DSM 11845 / VT8) (Marinobacter aquaeolei) protein is Queuine tRNA-ribosyltransferase.